A 365-amino-acid chain; its full sequence is tRNA/tmRNA (uracil-C(5))-methyltransferase (365 aa).

Positions 189, 217, 222, 238, and 298 each coordinate S-adenosyl-L-methionine. Cysteine 323 acts as the Nucleophile in catalysis. Glutamate 357 serves as the catalytic Proton acceptor.

This sequence belongs to the class I-like SAM-binding methyltransferase superfamily. RNA M5U methyltransferase family. TrmA subfamily.

It carries out the reaction uridine(54) in tRNA + S-adenosyl-L-methionine = 5-methyluridine(54) in tRNA + S-adenosyl-L-homocysteine + H(+). The enzyme catalyses uridine(341) in tmRNA + S-adenosyl-L-methionine = 5-methyluridine(341) in tmRNA + S-adenosyl-L-homocysteine + H(+). Its function is as follows. Dual-specificity methyltransferase that catalyzes the formation of 5-methyluridine at position 54 (m5U54) in all tRNAs, and that of position 341 (m5U341) in tmRNA (transfer-mRNA). The polypeptide is tRNA/tmRNA (uracil-C(5))-methyltransferase (Shewanella amazonensis (strain ATCC BAA-1098 / SB2B)).